The following is a 293-amino-acid chain: C-type lectin domain family 4 member G (293 aa).

Topologically, residues 1-31 (MDTTRYSKWGGSSEEVPGGPWGRWVHWSRRP) are cytoplasmic. Phosphoserine is present on Ser-12. The chain crosses the membrane as a helical; Signal-anchor for type II membrane protein span at residues 32-52 (LFLALAVLVTTVLWAVILSIL). The Extracellular segment spans residues 53–293 (LSKASTERAA…GWICEKRHNC (241 aa)). Asn-73 carries an N-linked (GlcNAc...) asparagine glycan. Residues 96 to 136 (SGTQAQLQTTRAELGEAQAKLMEQESALRELRERVTQGLAE) are a coiled coil. An N-linked (GlcNAc...) asparagine glycan is attached at Asn-159. The 116-residue stretch at 172–287 (FEGSCYFFSV…CDSEKDGWIC (116 aa)) folds into the C-type lectin domain. Residues Cys-264 and Cys-278 are joined by a disulfide bond.

(Microbial infection) Interacts with Japanese encephalitis virus envelope protein E. In terms of assembly, (Microbial infection) Interacts with ebolavirus glycoprotein. As to quaternary structure, (Microbial infection) Interacts with SARS-CoV spike glycoprotein. (Microbial infection) Interacts with lassa virus and Lymphocytic choriomeningitis virus glycoprotein. In terms of tissue distribution, expressed exclusively in fetal and adult liver and in lymph nodes. Specifically expressed by endothelial cells lining lymph node and liver sinuses (at protein level).

The protein resides in the cell membrane. Binds mannose, N-acetylglucosamine (GlcNAc) and fucose, but not galactose, in a Ca(2+)-dependent manner, in vitro. Functionally, (Microbial infection) Acts as a receptor for Japanese encephalitis virus. Its function is as follows. (Microbial infection) Acts as a receptor for Ebolavirus. In terms of biological role, (Microbial infection) Acts as a receptor for SARS-CoV. (Microbial infection) Acts as a receptor for Lassa virus and Lymphocytic choriomeningitis virus glycoprotein. The sequence is that of C-type lectin domain family 4 member G (CLEC4G) from Homo sapiens (Human).